Consider the following 149-residue polypeptide: MRMNKQIVVTDWIKEKPRLGSFLKLTLTSDERKILRGKRLTDCDQEIILQLPRNGKLNDGDILSTNESNFYVEIIAKTEDLIEISSNSKNELIKTAYHLGNRHVEVEIEEDILLTKSDYVIENMLKNFKVDIVNTQKKFSPEKGAHSHD.

It belongs to the UreE family.

It is found in the cytoplasm. In terms of biological role, involved in urease metallocenter assembly. Binds nickel. Probably functions as a nickel donor during metallocenter assembly. The polypeptide is Urease accessory protein UreE (Prochlorococcus marinus (strain MIT 9312)).